Reading from the N-terminus, the 373-residue chain is Histidinol-phosphate aminotransferase (373 aa).

Lysine 231 bears the N6-(pyridoxal phosphate)lysine mark.

Belongs to the class-II pyridoxal-phosphate-dependent aminotransferase family. Histidinol-phosphate aminotransferase subfamily. Pyridoxal 5'-phosphate is required as a cofactor.

It catalyses the reaction L-histidinol phosphate + 2-oxoglutarate = 3-(imidazol-4-yl)-2-oxopropyl phosphate + L-glutamate. The protein operates within amino-acid biosynthesis; L-histidine biosynthesis; L-histidine from 5-phospho-alpha-D-ribose 1-diphosphate: step 7/9. The chain is Histidinol-phosphate aminotransferase (hisC) from Methanocaldococcus jannaschii (strain ATCC 43067 / DSM 2661 / JAL-1 / JCM 10045 / NBRC 100440) (Methanococcus jannaschii).